The following is a 145-amino-acid chain: D-aminoacyl-tRNA deacylase (145 aa).

The Gly-cisPro motif, important for rejection of L-amino acids signature appears at 137–138 (GP).

Belongs to the DTD family. Homodimer.

It localises to the cytoplasm. It catalyses the reaction glycyl-tRNA(Ala) + H2O = tRNA(Ala) + glycine + H(+). The catalysed reaction is a D-aminoacyl-tRNA + H2O = a tRNA + a D-alpha-amino acid + H(+). Functionally, an aminoacyl-tRNA editing enzyme that deacylates mischarged D-aminoacyl-tRNAs. Also deacylates mischarged glycyl-tRNA(Ala), protecting cells against glycine mischarging by AlaRS. Acts via tRNA-based rather than protein-based catalysis; rejects L-amino acids rather than detecting D-amino acids in the active site. By recycling D-aminoacyl-tRNA to D-amino acids and free tRNA molecules, this enzyme counteracts the toxicity associated with the formation of D-aminoacyl-tRNA entities in vivo and helps enforce protein L-homochirality. The protein is D-aminoacyl-tRNA deacylase of Shewanella amazonensis (strain ATCC BAA-1098 / SB2B).